The primary structure comprises 657 residues: tRNA 5-methylaminomethyl-2-thiouridine biosynthesis bifunctional protein MnmC (657 aa).

The interval 1–238 is tRNA (mnm(5)s(2)U34)-methyltransferase; that stretch reads MPASTLLQHA…KWEVMSGEYT (238 aa). The interval 265-657 is FAD-dependent cmnm(5)s(2)U34 oxidoreductase; the sequence is IGAGLAGSAS…FGLRRLIRGK (393 aa).

It in the N-terminal section; belongs to the methyltransferase superfamily. tRNA (mnm(5)s(2)U34)-methyltransferase family. In the C-terminal section; belongs to the DAO family. Requires FAD as cofactor.

It localises to the cytoplasm. The catalysed reaction is 5-aminomethyl-2-thiouridine(34) in tRNA + S-adenosyl-L-methionine = 5-methylaminomethyl-2-thiouridine(34) in tRNA + S-adenosyl-L-homocysteine + H(+). Its function is as follows. Catalyzes the last two steps in the biosynthesis of 5-methylaminomethyl-2-thiouridine (mnm(5)s(2)U) at the wobble position (U34) in tRNA. Catalyzes the FAD-dependent demodification of cmnm(5)s(2)U34 to nm(5)s(2)U34, followed by the transfer of a methyl group from S-adenosyl-L-methionine to nm(5)s(2)U34, to form mnm(5)s(2)U34. In Pseudomonas putida (strain W619), this protein is tRNA 5-methylaminomethyl-2-thiouridine biosynthesis bifunctional protein MnmC.